The sequence spans 366 residues: Ribonuclease P protein subunit drpp30 (366 aa).

The interval 265–366 (EDTQPTNNNI…DIDNNKRKRE (102 aa)) is disordered. Positions 275-290 (PHEKHINKESTGKETI) are enriched in basic and acidic residues. Low complexity-rich tracts occupy residues 291–324 (PKPT…TPSI) and 333–351 (TAKS…AQKQ). The segment covering 352 to 366 (GKMDIDIDNNKRKRE) has biased composition (basic and acidic residues).

It belongs to the eukaryotic/archaeal RNase P protein component 3 family.

It localises to the nucleus. It catalyses the reaction Endonucleolytic cleavage of RNA, removing 5'-extranucleotides from tRNA precursor.. Functionally, component of ribonuclease P, a protein complex that generates mature tRNA molecules by cleaving their 5'-ends. This Dictyostelium discoideum (Social amoeba) protein is Ribonuclease P protein subunit drpp30 (drpp30).